Consider the following 96-residue polypeptide: Large ribosomal subunit protein uL23 (96 aa).

It belongs to the universal ribosomal protein uL23 family. Part of the 50S ribosomal subunit. Contacts protein L29, and trigger factor when it is bound to the ribosome.

Its function is as follows. One of the early assembly proteins it binds 23S rRNA. One of the proteins that surrounds the polypeptide exit tunnel on the outside of the ribosome. Forms the main docking site for trigger factor binding to the ribosome. This chain is Large ribosomal subunit protein uL23, found in Clostridium novyi (strain NT).